The chain runs to 203 residues: A-type ATP synthase subunit E (203 aa).

This sequence belongs to the V-ATPase E subunit family. Has multiple subunits with at least A(3), B(3), C, D, E, F, H, I and proteolipid K(x).

Its subcellular location is the cell membrane. In terms of biological role, component of the A-type ATP synthase that produces ATP from ADP in the presence of a proton gradient across the membrane. In Methanococcus maripaludis (strain C7 / ATCC BAA-1331), this protein is A-type ATP synthase subunit E.